The primary structure comprises 427 residues: Serine protease HTRA2, mitochondrial (427 aa).

The interval 33 to 55 is disordered; sequence HTASSSKGSGGDNSKDKENNGQN. Residues 66–86 traverse the membrane as a helical segment; sequence SAFQFCVPFSLGALVSAVLIE. An IAP-binding motif is present at residues 78-81; it reads ALVS. The tract at residues 144 to 307 is serine protease; it reads SNGSGFVIEQ…IPIDYVKVFL (164 aa). Residues histidine 162, aspartate 194, and serine 271 each act as charge relay system in the active site. The region spanning 330–415 is the PDZ domain; it reads MGITMLTLTP…DLEIVILRGV (86 aa).

Belongs to the peptidase S1C family. As to quaternary structure, interacts with th/DIAP1 (via BIR 2 domain).

Its subcellular location is the mitochondrion intermembrane space. It is found in the mitochondrion membrane. It carries out the reaction Cleavage of non-polar aliphatic amino-acids at the P1 position, with a preference for Val, Ile and Met. At the P2 and P3 positions, Arg is selected most strongly with a secondary preference for other hydrophilic residues.. Serine protease that shows proteolytic activity against a non-specific substrate beta-casein. Promotes or induces cell death either by direct binding to and inhibition of BIRC proteins (also called inhibitor of apoptosis proteins, IAPs), leading to an increase in caspase activity, or by a BIRC inhibition-independent, caspase-independent and serine protease activity-dependent mechanism. Can antagonize antiapoptotic activity of th/Diap1 by directly inducing the degradation of th/Diap1. This is Serine protease HTRA2, mitochondrial from Drosophila pseudoobscura pseudoobscura (Fruit fly).